Here is a 419-residue protein sequence, read N- to C-terminus: UDP-N-acetylglucosamine 1-carboxyvinyltransferase (419 aa).

Lys22 to Asn23 is a binding site for phosphoenolpyruvate. Arg93 provides a ligand contact to UDP-N-acetyl-alpha-D-glucosamine. Cys117 (proton donor) is an active-site residue. Cys117 carries the 2-(S-cysteinyl)pyruvic acid O-phosphothioketal modification. 2 residues coordinate UDP-N-acetyl-alpha-D-glucosamine: Asp307 and Ile329.

Belongs to the EPSP synthase family. MurA subfamily.

The protein resides in the cytoplasm. The enzyme catalyses phosphoenolpyruvate + UDP-N-acetyl-alpha-D-glucosamine = UDP-N-acetyl-3-O-(1-carboxyvinyl)-alpha-D-glucosamine + phosphate. It participates in cell wall biogenesis; peptidoglycan biosynthesis. Its function is as follows. Cell wall formation. Adds enolpyruvyl to UDP-N-acetylglucosamine. The protein is UDP-N-acetylglucosamine 1-carboxyvinyltransferase of Shewanella sp. (strain ANA-3).